The sequence spans 94 residues: Integration host factor subunit beta (94 aa).

It belongs to the bacterial histone-like protein family. Heterodimer of an alpha and a beta chain.

In terms of biological role, this protein is one of the two subunits of integration host factor, a specific DNA-binding protein that functions in genetic recombination as well as in transcriptional and translational control. In Chelativorans sp. (strain BNC1), this protein is Integration host factor subunit beta.